The primary structure comprises 361 residues: Palmitoyltransferase ZDHHC2 (361 aa).

Over 1–15 the chain is Cytoplasmic; the sequence is MAPSGSRSFDCWRVL. Residues 16–36 traverse the membrane as a helical segment; the sequence is YWIPVLFISLIVAWSYYAYVV. The Lumenal portion of the chain corresponds to 37 to 50; it reads QLCIETIENMGEKT. The chain crosses the membrane as a helical span at residues 51 to 71; sequence VYLLIYHLLFLMFVWSYWQTI. Residues 72–167 lie on the Cytoplasmic side of the membrane; the sequence is YSKPMNPLKE…NNCVGFANYK (96 aa). The DHHC domain maps to 124-174; sequence RYCDRCLLLKPDRCHHCSACDMCILKMDHHCPWVNNCVGFANYKFFMLFLA. The S-palmitoyl cysteine intermediate role is filled by Cys154. A helical transmembrane segment spans residues 168–188; sequence FFMLFLAYSLLYCLFVTATDM. Residues 189–207 lie on the Lumenal side of the membrane; that stretch reads QYFIQFWTNGLPDTQAKFH. A helical membrane pass occupies residues 208–228; the sequence is IMFLFFAASTFSVSLAFLFAY. Residues 229-361 are Cytoplasmic-facing; it reads HCWLVCKNRS…NPALTIEKET (133 aa). Positions 296 to 361 are mediates localization to plasma membrane and recycling endosomes; sequence NPDPEQPSIP…NPALTIEKET (66 aa). The segment covering 299–308 has biased composition (pro residues); it reads PEQPSIPPGR. A disordered region spans residues 299 to 361; sequence PEQPSIPPGR…NPALTIEKET (63 aa). The segment covering 331-340 has biased composition (polar residues); it reads SRLLNNGQTD. The short motif at 333–334 is the Non-canonical dileucine endocytic signal element; sequence LL. The NPxY-like endocytic signal motif lies at 352–355; the sequence is NPAL.

Belongs to the DHHC palmitoyltransferase family. As to quaternary structure, monomer. Homodimer. The monomeric form has a higher catalytic activity. Autopalmitoylated.

Its subcellular location is the endoplasmic reticulum membrane. The protein localises to the golgi apparatus membrane. It is found in the postsynaptic density. The protein resides in the postsynaptic recycling endosome membrane. It localises to the cell membrane. It carries out the reaction L-cysteinyl-[protein] + hexadecanoyl-CoA = S-hexadecanoyl-L-cysteinyl-[protein] + CoA. The enzyme catalyses L-cysteinyl-[protein] + tetradecanoyl-CoA = S-tetradecanoyl-L-cysteinyl-[protein] + CoA. The catalysed reaction is L-cysteinyl-[protein] + octadecanoyl-CoA = S-octadecanoyl-L-cysteinyl-[protein] + CoA. In terms of biological role, palmitoyltransferase that catalyzes the addition of palmitate onto various protein substrates and is involved in a variety of cellular processes. Has no stringent fatty acid selectivity and in addition to palmitate can also transfer onto target proteins myristate from tetradecanoyl-CoA and stearate from octadecanoyl-CoA. The sequence is that of Palmitoyltransferase ZDHHC2 from Danio rerio (Zebrafish).